Reading from the N-terminus, the 343-residue chain is NADH-cytochrome b5 reductase 2 (343 aa).

The helical transmembrane segment at 41-61 (ILLGAAAVGLAGAGAYFFSGA) threads the bilayer. The FAD-binding FR-type domain occupies 92–197 (QGWLSLKLEE…KGPLPKYPWE (106 aa)). 200–235 (KHKHIALVAGGTGITPMYQLIRAIFNNPDDKTKVTL) provides a ligand contact to FAD.

Belongs to the flavoprotein pyridine nucleotide cytochrome reductase family. Requires FAD as cofactor.

The protein resides in the mitochondrion outer membrane. It carries out the reaction 2 Fe(III)-[cytochrome b5] + NADH = 2 Fe(II)-[cytochrome b5] + NAD(+) + H(+). In terms of biological role, may mediate the reduction of outer membrane cytochrome b5. The protein is NADH-cytochrome b5 reductase 2 (mcr-1) of Neurospora crassa (strain ATCC 24698 / 74-OR23-1A / CBS 708.71 / DSM 1257 / FGSC 987).